A 572-amino-acid chain; its full sequence is Proline--tRNA ligase (572 aa).

Belongs to the class-II aminoacyl-tRNA synthetase family. ProS type 1 subfamily. As to quaternary structure, homodimer.

It is found in the cytoplasm. The enzyme catalyses tRNA(Pro) + L-proline + ATP = L-prolyl-tRNA(Pro) + AMP + diphosphate. Its function is as follows. Catalyzes the attachment of proline to tRNA(Pro) in a two-step reaction: proline is first activated by ATP to form Pro-AMP and then transferred to the acceptor end of tRNA(Pro). As ProRS can inadvertently accommodate and process non-cognate amino acids such as alanine and cysteine, to avoid such errors it has two additional distinct editing activities against alanine. One activity is designated as 'pretransfer' editing and involves the tRNA(Pro)-independent hydrolysis of activated Ala-AMP. The other activity is designated 'posttransfer' editing and involves deacylation of mischarged Ala-tRNA(Pro). The misacylated Cys-tRNA(Pro) is not edited by ProRS. This is Proline--tRNA ligase from Escherichia coli (strain K12 / MC4100 / BW2952).